The following is a 399-amino-acid chain: Phosphoglycerate kinase (399 aa).

Residues Asp21–Asn23, Arg36, His59–Arg62, Arg120, and Arg158 contribute to the substrate site. ATP contacts are provided by residues Lys209, Gly297, Glu328, and Gly355–Ser358.

The protein belongs to the phosphoglycerate kinase family. As to quaternary structure, monomer.

The protein resides in the cytoplasm. It carries out the reaction (2R)-3-phosphoglycerate + ATP = (2R)-3-phospho-glyceroyl phosphate + ADP. Its pathway is carbohydrate degradation; glycolysis; pyruvate from D-glyceraldehyde 3-phosphate: step 2/5. The chain is Phosphoglycerate kinase from Streptococcus thermophilus (strain ATCC BAA-250 / LMG 18311).